Reading from the N-terminus, the 287-residue chain is Phosphatidylglycerol--prolipoprotein diacylglyceryl transferase (287 aa).

4 helical membrane-spanning segments follow: residues 15-35, 55-75, 90-110, and 117-137; these read IGPL…ILAI, FVMF…VFFE, IWEG…TAIV, and VSFW…QAIG. Arg138 provides a ligand contact to a 1,2-diacyl-sn-glycero-3-phospho-(1'-sn-glycerol). The next 2 helical transmembrane spans lie at 180-200 and 238-258; these read HPTF…LLLL and IIRT…IFII.

The protein belongs to the Lgt family.

It localises to the cell membrane. It carries out the reaction L-cysteinyl-[prolipoprotein] + a 1,2-diacyl-sn-glycero-3-phospho-(1'-sn-glycerol) = an S-1,2-diacyl-sn-glyceryl-L-cysteinyl-[prolipoprotein] + sn-glycerol 1-phosphate + H(+). It participates in protein modification; lipoprotein biosynthesis (diacylglyceryl transfer). Functionally, catalyzes the transfer of the diacylglyceryl group from phosphatidylglycerol to the sulfhydryl group of the N-terminal cysteine of a prolipoprotein, the first step in the formation of mature lipoproteins. The protein is Phosphatidylglycerol--prolipoprotein diacylglyceryl transferase of Oceanobacillus iheyensis (strain DSM 14371 / CIP 107618 / JCM 11309 / KCTC 3954 / HTE831).